Here is a 685-residue protein sequence, read N- to C-terminus: Probable transketolase (685 aa).

Histidine 32 provides a ligand contact to substrate. Thiamine diphosphate-binding positions include histidine 72 and 121-123; that span reads GPL. Aspartate 162 contacts Mg(2+). Glycine 163 and asparagine 192 together coordinate thiamine diphosphate. Residues asparagine 192 and isoleucine 194 each contribute to the Mg(2+) site. Residues histidine 268, arginine 363, and serine 390 each coordinate substrate. Thiamine diphosphate is bound at residue histidine 268. Residues glutamate 422 and phenylalanine 448 each contribute to the thiamine diphosphate site. The active-site Proton donor is glutamate 422. Substrate contacts are provided by histidine 472, aspartate 480, and arginine 531.

Belongs to the transketolase family. As to quaternary structure, homodimer. Requires Mg(2+) as cofactor. Ca(2+) is required as a cofactor. Mn(2+) serves as cofactor. The cofactor is Co(2+). It depends on thiamine diphosphate as a cofactor.

It carries out the reaction D-sedoheptulose 7-phosphate + D-glyceraldehyde 3-phosphate = aldehydo-D-ribose 5-phosphate + D-xylulose 5-phosphate. Its function is as follows. Catalyzes the transfer of a two-carbon ketol group from a ketose donor to an aldose acceptor, via a covalent intermediate with the cofactor thiamine pyrophosphate. The sequence is that of Probable transketolase from Schizosaccharomyces pombe (strain 972 / ATCC 24843) (Fission yeast).